A 49-amino-acid polypeptide reads, in one-letter code: Large ribosomal subunit protein bL33B (49 aa).

Belongs to the bacterial ribosomal protein bL33 family.

This Lactococcus lactis subsp. cremoris (Streptococcus cremoris) protein is Large ribosomal subunit protein bL33B (rpmG2).